The following is a 343-amino-acid chain: UPF0324 membrane protein LJ_1117 (343 aa).

Helical transmembrane passes span 10–27, 32–54, 64–86, 91–113, 123–145, 157–179, 219–241, 262–284, 288–310, and 317–339; these read FGLA…GIFL, YVNL…VLPV, IGFI…LNLT, AGIK…TYWL, LAVL…VSPQ, NEVL…EIVI, ALIM…GYWY, IPWF…FPPV, GLVQ…SVNF, and GGTV…IIMS.

This sequence belongs to the UPF0324 family.

Its subcellular location is the cell membrane. This Lactobacillus johnsonii (strain CNCM I-12250 / La1 / NCC 533) protein is UPF0324 membrane protein LJ_1117.